A 182-amino-acid chain; its full sequence is ATP-dependent protease subunit HslV (182 aa).

T6 is a catalytic residue. Na(+)-binding residues include A164, C167, and T170.

It belongs to the peptidase T1B family. HslV subfamily. As to quaternary structure, a double ring-shaped homohexamer of HslV is capped on each side by a ring-shaped HslU homohexamer. The assembly of the HslU/HslV complex is dependent on binding of ATP.

It is found in the cytoplasm. The enzyme catalyses ATP-dependent cleavage of peptide bonds with broad specificity.. Allosterically activated by HslU binding. Protease subunit of a proteasome-like degradation complex believed to be a general protein degrading machinery. This chain is ATP-dependent protease subunit HslV, found in Borreliella afzelii (strain PKo) (Borrelia afzelii).